The chain runs to 246 residues: Endonuclease V (246 aa).

Residues Asp50 and Asp120 each contribute to the Mg(2+) site.

Belongs to the endonuclease V family. Mg(2+) is required as a cofactor.

The protein resides in the cytoplasm. It carries out the reaction Endonucleolytic cleavage at apurinic or apyrimidinic sites to products with a 5'-phosphate.. Its function is as follows. DNA repair enzyme involved in the repair of deaminated bases. Selectively cleaves double-stranded DNA at the second phosphodiester bond 3' to a deoxyinosine leaving behind the intact lesion on the nicked DNA. The polypeptide is Endonuclease V (Gloeobacter violaceus (strain ATCC 29082 / PCC 7421)).